Here is a 331-residue protein sequence, read N- to C-terminus: Ribose-phosphate pyrophosphokinase (331 aa).

Position 55-57 (55-57) interacts with ATP; sequence DGE. Mg(2+) is bound by residues histidine 148 and aspartate 187. Lysine 211 is an active-site residue. D-ribose 5-phosphate-binding positions include arginine 213, aspartate 237, and 241-245; that span reads DTGGT.

The protein belongs to the ribose-phosphate pyrophosphokinase family. Class I subfamily. As to quaternary structure, homohexamer. Mg(2+) serves as cofactor.

It is found in the cytoplasm. The catalysed reaction is D-ribose 5-phosphate + ATP = 5-phospho-alpha-D-ribose 1-diphosphate + AMP + H(+). It participates in metabolic intermediate biosynthesis; 5-phospho-alpha-D-ribose 1-diphosphate biosynthesis; 5-phospho-alpha-D-ribose 1-diphosphate from D-ribose 5-phosphate (route I): step 1/1. Functionally, involved in the biosynthesis of the central metabolite phospho-alpha-D-ribosyl-1-pyrophosphate (PRPP) via the transfer of pyrophosphoryl group from ATP to 1-hydroxyl of ribose-5-phosphate (Rib-5-P). In Parasynechococcus marenigrum (strain WH8102), this protein is Ribose-phosphate pyrophosphokinase.